A 4246-amino-acid polypeptide reads, in one-letter code: Intermembrane lipid transfer protein vps13F (4246 aa).

Positions 2–113 (FESIVSNLLT…LLLQKKLKKL (112 aa)) constitute a Chorein N-terminal domain. Disordered regions lie at residues 141 to 271 (IKEK…EDED), 401 to 420 (PKKS…PPPK), 591 to 759 (KAED…SILG), 914 to 944 (VSSS…EKKL), 964 to 1014 (KKSK…TNDE), 1217 to 1251 (QAQQ…IKSP), 1356 to 1379 (ISTH…DRVD), 1395 to 1436 (YNGV…KSKK), 1622 to 1683 (REKR…KSQS), 2101 to 2131 (LESL…QQQQ), 2211 to 2237 (HHSK…EKEK), 2471 to 2513 (QQQH…KSKQ), 2704 to 2756 (LSTS…QTTK), 3421 to 3449 (IDDD…TSPL), 3611 to 3652 (KTLN…NNQN), and 3794 to 3813 (NNNN…NIDE). Positions 168-201 (NASPVNSNNNNNNNSNLVSESNIPSSSSSSSSSL) are enriched in low complexity. Basic and acidic residues predominate over residues 207-217 (NSSKDANKSDD). The span at 218–271 (TDMDVDDDDEFQEATEGDYDNEEEQDDHDEEDDLSDDDDDDDDEEDDYEMEDED) shows a compositional bias: acidic residues. Low complexity-rich tracts occupy residues 401-413 (PKKS…TTTP) and 597-658 (QQQQ…SNST). Basic and acidic residues predominate over residues 659–668 (DSKDIMKSSG). The segment covering 669–680 (DKNVNNNNNMGD) has biased composition (low complexity). Positions 681–702 (NENKDNIDKKEENKNDDQDNKN) are enriched in basic and acidic residues. Low complexity-rich tracts occupy residues 725-747 (SGGW…QQQQ) and 914-924 (VSSSPSPVSSP). 2 stretches are compositionally biased toward basic and acidic residues: residues 925–944 (SRDK…EKKL) and 987–1001 (DKYS…REES). The segment covering 1217–1241 (QAQQQAQQQQQSQHPSSNDDNSSSN) has biased composition (low complexity). Residues 1400–1409 (SDDDNNDDEN) are compositionally biased toward acidic residues. Composition is skewed to basic and acidic residues over residues 1410-1431 (DKTT…DSLK) and 1622-1634 (REKR…DKDN). Low complexity predominate over residues 1644–1670 (QQSIPQKQQQQQQQQQQQQQQQQQQQQ). 5 stretches are compositionally biased toward low complexity: residues 2471–2506 (QQQH…NNNN), 2705–2755 (STST…TQTT), 3430–3449 (DSGS…TSPL), 3613–3652 (LNNN…NNQN), and 3794–3809 (NNNN…NDFN).

It belongs to the VPS13 family.

The protein localises to the membrane. In terms of biological role, mediates the transfer of lipids between membranes at organelle contact sites. The chain is Intermembrane lipid transfer protein vps13F (vps13F) from Dictyostelium discoideum (Social amoeba).